The chain runs to 91 residues: Small ribosomal subunit protein bS20 (91 aa).

The span at 1–18 (MPLHKSAEKRLRQSEKRN) shows a compositional bias: basic and acidic residues. Positions 1-24 (MPLHKSAEKRLRQSEKRNVRNRAR) are disordered.

This sequence belongs to the bacterial ribosomal protein bS20 family.

Functionally, binds directly to 16S ribosomal RNA. This chain is Small ribosomal subunit protein bS20, found in Chlorobium phaeobacteroides (strain DSM 266 / SMG 266 / 2430).